The sequence spans 578 residues: Potassium-transporting ATPase potassium-binding subunit (578 aa).

11 helical membrane passes run 3–23 (AAALAEIAAFFGLLTAAAVPL), 67–87 (AAAALTFNAAGLLAVFALERL), 95–115 (PAGLPAVSPLVAWNTAVSFAT), 136–156 (ALTVQNFLSAATGISVLAALV), 181–201 (LLLPLAAALALLLAWQGVPQT), 264–284 (LEALSILLVPAALCFAFGALV), 291–311 (WTVYSAMLAILVPLTVATVSA), 396–416 (GLYGMLLFAILAVFLAGLMVG), 436–456 (LAILAPSATVLLGTAAACLLP), 504–524 (VAMLVGRYWVMLPVLAIAGAF), and 543–563 (LFAGLLVATVLLVGALTFLPA).

It belongs to the KdpA family. In terms of assembly, the system is composed of three essential subunits: KdpA, KdpB and KdpC.

Its subcellular location is the cell inner membrane. Functionally, part of the high-affinity ATP-driven potassium transport (or Kdp) system, which catalyzes the hydrolysis of ATP coupled with the electrogenic transport of potassium into the cytoplasm. This subunit binds the periplasmic potassium ions and delivers the ions to the membrane domain of KdpB through an intramembrane tunnel. This is Potassium-transporting ATPase potassium-binding subunit from Anaeromyxobacter dehalogenans (strain 2CP-C).